We begin with the raw amino-acid sequence, 954 residues long: Glycine dehydrogenase (decarboxylating) (954 aa).

N6-(pyridoxal phosphate)lysine is present on K704.

The protein belongs to the GcvP family. In terms of assembly, the glycine cleavage system is composed of four proteins: P, T, L and H. Pyridoxal 5'-phosphate serves as cofactor.

The catalysed reaction is N(6)-[(R)-lipoyl]-L-lysyl-[glycine-cleavage complex H protein] + glycine + H(+) = N(6)-[(R)-S(8)-aminomethyldihydrolipoyl]-L-lysyl-[glycine-cleavage complex H protein] + CO2. In terms of biological role, the glycine cleavage system catalyzes the degradation of glycine. The P protein binds the alpha-amino group of glycine through its pyridoxal phosphate cofactor; CO(2) is released and the remaining methylamine moiety is then transferred to the lipoamide cofactor of the H protein. The chain is Glycine dehydrogenase (decarboxylating) from Rhizobium leguminosarum bv. trifolii (strain WSM2304).